An 860-amino-acid chain; its full sequence is Ras GTPase-activating-like protein gapA (860 aa).

Residues 1 to 20 are compositionally biased toward acidic residues; that stretch reads MEGLEIEDEDVILLDEDDDS. Positions 1-48 are disordered; the sequence is MEGLEIEDEDVILLDEDDDSSSSSTVNNSSSNIKNNGNTNNNIGNDDS. Residues 21-46 are compositionally biased toward low complexity; that stretch reads SSSSTVNNSSSNIKNNGNTNNNIGND. A coiled-coil region spans residues 146-185; the sequence is AEIQELKRNMVAEIRRNHLLERDVNKLDKRIALLIKHRSN. One can recognise a Ras-GAP domain in the interval 269-515; that stretch reads FLILSLFRLA…SIVRQYLEDL (247 aa). A coiled-coil region spans residues 663 to 732; the sequence is NNPQLSSNAE…TIALRDLRKH (70 aa).

In terms of assembly, heterotetramer. Quaternary complex with activated rac1A, ctxA and ctxB in the absence of rgaA.

In terms of biological role, part of signaling pathway that is required for completion of cytokinesis. gapA and rgaA control cortexillin localization to the cleavage furrow and hence may be involved in cleavage of the midbody in the final stage of cytokinesis by regulating the actin cytoskeleton. Forms a complex by linking activated rac1A to ctxA in the absence of rgaA. Assembly of this complex is necessary for the recruitment of cortexillin to the midzone of the dividing cell. In Dictyostelium discoideum (Social amoeba), this protein is Ras GTPase-activating-like protein gapA (gapA).